The sequence spans 96 residues: Auxin-responsive protein SAUR29 (96 aa).

This sequence belongs to the ARG7 family.

It is found in the cell membrane. Functions as a positive effector of cell expansion through modulation of auxin transport. Involved in thermo-responsiveness of plant architecture. Enhances plasma membrane H(+)-ATPase. The sequence is that of Auxin-responsive protein SAUR29 from Arabidopsis thaliana (Mouse-ear cress).